The sequence spans 130 residues: Vascular-related unknown protein 3 (130 aa).

Residues 45-81 (DDSSMMSDAASPMGCVEEDTASSPSNRTEGYSGMEDN) are disordered.

Its function is as follows. Involved in the regulation of plant growth. The chain is Vascular-related unknown protein 3 from Arabidopsis thaliana (Mouse-ear cress).